The primary structure comprises 436 residues: Enolase (436 aa).

His-159 and Glu-168 together coordinate substrate. Catalysis depends on Glu-211, which acts as the Proton donor. Residues Asp-246, Glu-295, and Asp-320 each coordinate Mg(2+). Substrate is bound by residues Glu-295 and Asp-320. Lys-345 serves as the catalytic Proton acceptor. Residues 372-375 and Lys-396 contribute to the substrate site; that span reads SHRS.

This sequence belongs to the enolase family. In terms of assembly, homodimer. Mg(2+) serves as cofactor.

Its subcellular location is the cytoplasm. It carries out the reaction (2R)-2-phosphoglycerate = phosphoenolpyruvate + H2O. Its pathway is carbohydrate degradation; glycolysis; pyruvate from D-glyceraldehyde 3-phosphate: step 4/5. In Cunninghamella elegans, this protein is Enolase.